A 156-amino-acid chain; its full sequence is Transcription antitermination protein NusB (156 aa).

The protein belongs to the NusB family.

Functionally, involved in transcription antitermination. Required for transcription of ribosomal RNA (rRNA) genes. Binds specifically to the boxA antiterminator sequence of the ribosomal RNA (rrn) operons. This chain is Transcription antitermination protein NusB, found in Rickettsia massiliae (strain Mtu5).